Reading from the N-terminus, the 201-residue chain is Small ribosomal subunit protein uS4c (201 aa).

An S4 RNA-binding domain is found at 91–151; the sequence is MRLDNIIFQL…TKNPEELRTI (61 aa).

The protein belongs to the universal ribosomal protein uS4 family. As to quaternary structure, part of the 30S ribosomal subunit. Contacts protein S5. The interaction surface between S4 and S5 is involved in control of translational fidelity.

It is found in the plastid. The protein localises to the chloroplast. One of the primary rRNA binding proteins, it binds directly to 16S rRNA where it nucleates assembly of the body of the 30S subunit. Its function is as follows. With S5 and S12 plays an important role in translational accuracy. In Welwitschia mirabilis (Tree tumbo), this protein is Small ribosomal subunit protein uS4c (rps4).